Consider the following 759-residue polypeptide: Phosphoribosylformylglycinamidine synthase subunit PurL (759 aa).

His46 is a catalytic residue. 2 residues coordinate ATP: Tyr49 and Lys88. Mg(2+) is bound at residue Glu90. Substrate contacts are provided by residues 91 to 94 (SHNH) and Arg113. His92 acts as the Proton acceptor in catalysis. Asp114 lines the Mg(2+) pocket. Residue Gln237 participates in substrate binding. Asp265 is a binding site for Mg(2+). 309–311 (ESQ) lines the substrate pocket. The ATP site is built by Asp498 and Gly535. Residue Asn536 participates in Mg(2+) binding. Ser538 contacts substrate.

It belongs to the FGAMS family. As to quaternary structure, monomer. Part of the FGAM synthase complex composed of 1 PurL, 1 PurQ and 2 PurS subunits.

It localises to the cytoplasm. It catalyses the reaction N(2)-formyl-N(1)-(5-phospho-beta-D-ribosyl)glycinamide + L-glutamine + ATP + H2O = 2-formamido-N(1)-(5-O-phospho-beta-D-ribosyl)acetamidine + L-glutamate + ADP + phosphate + H(+). It functions in the pathway purine metabolism; IMP biosynthesis via de novo pathway; 5-amino-1-(5-phospho-D-ribosyl)imidazole from N(2)-formyl-N(1)-(5-phospho-D-ribosyl)glycinamide: step 1/2. Its function is as follows. Part of the phosphoribosylformylglycinamidine synthase complex involved in the purines biosynthetic pathway. Catalyzes the ATP-dependent conversion of formylglycinamide ribonucleotide (FGAR) and glutamine to yield formylglycinamidine ribonucleotide (FGAM) and glutamate. The FGAM synthase complex is composed of three subunits. PurQ produces an ammonia molecule by converting glutamine to glutamate. PurL transfers the ammonia molecule to FGAR to form FGAM in an ATP-dependent manner. PurS interacts with PurQ and PurL and is thought to assist in the transfer of the ammonia molecule from PurQ to PurL. This is Phosphoribosylformylglycinamidine synthase subunit PurL from Anaeromyxobacter dehalogenans (strain 2CP-1 / ATCC BAA-258).